The chain runs to 233 residues: 27 kDa hemolymph glycoprotein (233 aa).

An N-terminal signal peptide occupies residues 1 to 17 (MIWKTLIVAFMATAVLA). N-linked (GlcNAc...) asparagine glycosylation is found at N125 and N156.

This sequence belongs to the UPF0408 family. In terms of processing, N-glycosylated. Hemolymph.

Its subcellular location is the secreted. This is 27 kDa hemolymph glycoprotein from Manduca sexta (Tobacco hawkmoth).